The sequence spans 91 residues: UPF0213 protein NGO_1598 (91 aa).

Positions 4–83 (SNWSVYLILC…AAQKRQLWEQ (80 aa)) constitute a GIY-YIG domain.

The protein belongs to the UPF0213 family.

The chain is UPF0213 protein NGO_1598 from Neisseria gonorrhoeae (strain ATCC 700825 / FA 1090).